The primary structure comprises 187 residues: Fibroblast growth factor 4A (187 aa).

The N-terminal stretch at 1–22 is a signal peptide; sequence MTVPSALVPILLLGTAAVMVQC.

It belongs to the heparin-binding growth factors family.

It is found in the secreted. Plays an important role in the regulation of embryonic development, cell proliferation, and cell differentiation. Good candidate for an inducing factor with possible roles both in mesoderm induction at the blastula stage and in the formation of the anteroposterior axis at the gastrula stage. In Xenopus laevis (African clawed frog), this protein is Fibroblast growth factor 4A (fgf4-a).